Consider the following 180-residue polypeptide: MEQYRGTTIVSVRRGNNVVIGGDGQVSLGNTVMKGNARKVRRLFHGKVIAGFAGGTADAFTLFERFEAQLEKHQGHLVRAAVELAKDWRTDRALRRLEALLAVADKESSLIITGNGDVIEPEKDGLIAIGSGGPFAQSAATALLDNTDLPARDIVAKALTIAGDICIYTNHNHTFEELDG.

Residue threonine 7 is part of the active site. Na(+)-binding residues include glycine 163, cysteine 166, and threonine 169.

It belongs to the peptidase T1B family. HslV subfamily. In terms of assembly, a double ring-shaped homohexamer of HslV is capped on each side by a ring-shaped HslU homohexamer. The assembly of the HslU/HslV complex is dependent on binding of ATP.

The protein resides in the cytoplasm. It carries out the reaction ATP-dependent cleavage of peptide bonds with broad specificity.. Allosterically activated by HslU binding. Its function is as follows. Protease subunit of a proteasome-like degradation complex believed to be a general protein degrading machinery. The chain is ATP-dependent protease subunit HslV from Alcanivorax borkumensis (strain ATCC 700651 / DSM 11573 / NCIMB 13689 / SK2).